A 171-amino-acid chain; its full sequence is Vimentin-type intermediate filament-associated coiled-coil protein (171 aa).

A coiled-coil region spans residues 7-98 (LQIREANAHL…QRDQMIQELQ (92 aa)). The interval 126 to 171 (ELGPLPSSHSHGAQLLPDGPGPPLGNSMREEEGQDDQQPAVFGTTV) is disordered.

Expressed in brain, heart, kidney, liver, lung, skeletal muscle, spleen and testis. Within the kidney expression is pronounced within glomeruli.

The protein localises to the cytoplasm. This chain is Vimentin-type intermediate filament-associated coiled-coil protein (Vmac), found in Rattus norvegicus (Rat).